Consider the following 238-residue polypeptide: Orotidine 5'-phosphate decarboxylase (238 aa).

Residues Asp10, Lys32, 59-68, Thr122, Arg184, Gln193, Gly213, and Arg214 each bind substrate; that span reads DLKLHDIPNT. Lys61 functions as the Proton donor in the catalytic mechanism.

It belongs to the OMP decarboxylase family. Type 1 subfamily. Homodimer.

The enzyme catalyses orotidine 5'-phosphate + H(+) = UMP + CO2. Its pathway is pyrimidine metabolism; UMP biosynthesis via de novo pathway; UMP from orotate: step 2/2. Catalyzes the decarboxylation of orotidine 5'-monophosphate (OMP) to uridine 5'-monophosphate (UMP). This chain is Orotidine 5'-phosphate decarboxylase, found in Bacillus cereus (strain AH187).